Here is a 114-residue protein sequence, read N- to C-terminus: MAECPTLGEAVTDHPDRLWAWEKFVYLDEKQHAWLPLTIEIKDRLQLRVLLRREDVVLGRPMTPTQIGPSLLPIMWQLYPDGRYRSSDSSFWRLVYHIKIDGVEDMLLELLPDD.

This sequence belongs to the TCL1 family. In terms of assembly, homodimer. Interacts with AKT1, AKT2 and AKT3 (via PH domain). Interacts with PNPT1; the interaction has no effect on PNPT1 exonuclease activity. Restricted in the T-cell lineage to immature thymocytes and activated peripheral lymphocytes. Preferentially expressed early in T- and B-lymphocyte differentiation.

It is found in the cytoplasm. It localises to the nucleus. The protein localises to the microsome. Its subcellular location is the endoplasmic reticulum. Functionally, enhances the phosphorylation and activation of AKT1, AKT2 and AKT3. Promotes nuclear translocation of AKT1. Enhances cell proliferation, stabilizes mitochondrial membrane potential and promotes cell survival. This is T-cell leukemia/lymphoma protein 1A (TCL1A) from Homo sapiens (Human).